We begin with the raw amino-acid sequence, 238 residues long: Small ribosomal subunit protein uS3 (238 aa).

Residues 39–109 enclose the KH type-2 domain; the sequence is IRTFINQQLA…TIKVNVVEVN (71 aa). The disordered stretch occupies residues 215-238; that stretch reads EAVPREATRRSPQRRLPQFENRSN.

This sequence belongs to the universal ribosomal protein uS3 family. Part of the 30S ribosomal subunit. Forms a tight complex with proteins S10 and S14.

In terms of biological role, binds the lower part of the 30S subunit head. Binds mRNA in the 70S ribosome, positioning it for translation. In Thermosynechococcus vestitus (strain NIES-2133 / IAM M-273 / BP-1), this protein is Small ribosomal subunit protein uS3.